Here is a 569-residue protein sequence, read N- to C-terminus: Cysteine--tRNA ligase CPS1 homolog, chloroplastic/mitochondrial (569 aa).

A chloroplast and mitochondrion-targeting transit peptide spans 1–42 (MAAARRAAGLLPLLLSSPSRARLPHRQALALTPPLLRPHRLY). Cys99 serves as a coordination point for Zn(2+). A 'HIGH' region motif is present at residues 101 to 111 (VTPYDDSHIGH). Residues Cys279, His304, and Glu308 each coordinate Zn(2+). A 'KMSKS' region motif is present at residues 336-340 (KMSKS). Lys339 lines the ATP pocket.

It belongs to the class-I aminoacyl-tRNA synthetase family. The cofactor is Zn(2+).

It localises to the plastid. The protein resides in the chloroplast. The protein localises to the mitochondrion. It carries out the reaction tRNA(Cys) + L-cysteine + ATP = L-cysteinyl-tRNA(Cys) + AMP + diphosphate. In terms of biological role, nuclear genome-encoded factor required for normal assembly of chloroplast polysomes. The chain is Cysteine--tRNA ligase CPS1 homolog, chloroplastic/mitochondrial from Oryza sativa subsp. japonica (Rice).